A 233-amino-acid chain; its full sequence is MPYEPPTHTVERSLRATTGAKVIAGVDEVGRGAWAGPVTVCAAITGLRRPPEGLTDSKLLTVKRRTVLAEELRKWVTSYALGHASPEEIDALGMTAALRLAAVRALEALPVRPDAVILDGKHDYLGSPWKVRTVIKGDQSCVAVAAASVIAKVQRDKMMAELGIEHADFGFAANAGYPSPVHKAALAERGPTPYHRLSWAYLDALPQWRHLKKVRSWADGSVPEIEGQLGFDF.

The RNase H type-2 domain occupies 21–211 (KVIAGVDEVG…LDALPQWRHL (191 aa)). The a divalent metal cation site is built by Asp27, Glu28, and Asp119.

Belongs to the RNase HII family. Requires Mn(2+) as cofactor. It depends on Mg(2+) as a cofactor.

Its subcellular location is the cytoplasm. It catalyses the reaction Endonucleolytic cleavage to 5'-phosphomonoester.. Endonuclease that specifically degrades the RNA of RNA-DNA hybrids. The protein is Ribonuclease HII of Streptomyces avermitilis (strain ATCC 31267 / DSM 46492 / JCM 5070 / NBRC 14893 / NCIMB 12804 / NRRL 8165 / MA-4680).